A 223-amino-acid polypeptide reads, in one-letter code: Translation initiation factor 6 (223 aa).

This sequence belongs to the eIF-6 family.

In terms of biological role, binds to the 50S ribosomal subunit and prevents its association with the 30S ribosomal subunit to form the 70S initiation complex. The protein is Translation initiation factor 6 of Sulfolobus acidocaldarius (strain ATCC 33909 / DSM 639 / JCM 8929 / NBRC 15157 / NCIMB 11770).